Here is a 319-residue protein sequence, read N- to C-terminus: Methionyl-tRNA formyltransferase (319 aa).

Residue 112 to 115 (SLLP) coordinates (6S)-5,6,7,8-tetrahydrofolate.

Belongs to the Fmt family.

The enzyme catalyses L-methionyl-tRNA(fMet) + (6R)-10-formyltetrahydrofolate = N-formyl-L-methionyl-tRNA(fMet) + (6S)-5,6,7,8-tetrahydrofolate + H(+). Functionally, attaches a formyl group to the free amino group of methionyl-tRNA(fMet). The formyl group appears to play a dual role in the initiator identity of N-formylmethionyl-tRNA by promoting its recognition by IF2 and preventing the misappropriation of this tRNA by the elongation apparatus. This chain is Methionyl-tRNA formyltransferase, found in Pelobacter propionicus (strain DSM 2379 / NBRC 103807 / OttBd1).